We begin with the raw amino-acid sequence, 576 residues long: Arginine--tRNA ligase (576 aa).

The 'HIGH' region signature appears at 132–142 (ANPTGPMHIGH).

This sequence belongs to the class-I aminoacyl-tRNA synthetase family. Monomer.

It is found in the cytoplasm. It carries out the reaction tRNA(Arg) + L-arginine + ATP = L-arginyl-tRNA(Arg) + AMP + diphosphate. The sequence is that of Arginine--tRNA ligase from Ehrlichia ruminantium (strain Gardel).